A 102-amino-acid polypeptide reads, in one-letter code: Large ribosomal subunit protein P1 (102 aa).

The tract at residues 69-91 (APAAAAEEKKEEEKKEEKKEEDT) is disordered. The segment covering 74 to 90 (AEEKKEEEKKEEKKEED) has biased composition (basic and acidic residues).

This sequence belongs to the eukaryotic ribosomal protein P1/P2 family. Part of the 50S ribosomal subunit. Homodimer, it forms part of the ribosomal stalk which helps the ribosome interact with GTP-bound translation factors. Forms a heptameric uL10/P0(P1)2(P1)2(P1)2 complex, where uL10/P0 forms an elongated spine to which the P1 dimers bind in a sequential fashion.

In terms of biological role, forms part of the ribosomal stalk, playing a central role in the interaction of the ribosome with GTP-bound translation factors. This is Large ribosomal subunit protein P1 from Methanocaldococcus jannaschii (strain ATCC 43067 / DSM 2661 / JAL-1 / JCM 10045 / NBRC 100440) (Methanococcus jannaschii).